The sequence spans 615 residues: Forkhead box protein O (615 aa).

Disordered stretches follow at residues 39-77, 182-205, 217-269, 318-359, and 389-409; these read RARS…DSQQ, KSVR…RAKK, GLND…RLSP, FSAA…APGY, and NSVT…SDSL. T44 carries the phosphothreonine; by PKB/AKT1 modification. The span at 63 to 77 shows a compositional bias: polar residues; that stretch reads TKASNQQLAPGDSQQ. A Phosphoserine modification is found at S75. The segment at residues 95-201 is a DNA-binding region (fork-head); it reads WGNLSYADLI…ETSRYEKRRG (107 aa). A Phosphoserine; by PKB/AKT1 modification is found at S190. 2 stretches are compositionally biased toward polar residues: residues 221–230 and 256–265; these read ATPSPSSSVS and RASSNASSCG. S259 is modified (phosphoserine; by PKB/AKT1). Phosphoserine is present on residues S262, S263, and S268. Residues 326–335 show a composition bias toward pro residues; that stretch reads SQPPPPPYQP. The segment covering 336–351 has biased composition (low complexity); sequence PQHQQAQQQQQQSPYA.

As to quaternary structure, interacts with melt.

The protein resides in the cytoplasm. It localises to the nucleus. Functionally, transcription factor involved in the regulation of the insulin signaling pathway. Consistently activates both the downstream target Thor\d4EBP and the feedback control target InR. Involved in negative regulation of the cell cycle, modulating cell growth and proliferation. In response to cellular stresses, such as nutrient deprivation or increased levels of reactive oxygen species, foxo is activated and inhibits growth through the action of target genes such as Thor. Foxo activated in the adult fat body can regulate lifespan in adults; an insulin peptide itself may function as one secondary messenger of insulin-regulated aging. Also regulates Lip4, homolog of human acid lipases, thereby acting as a key modulator of lipid metabolism by insulin signaling and integrates insulin responses to glucose and lipid homeostasis. The polypeptide is Forkhead box protein O (Drosophila erecta (Fruit fly)).